We begin with the raw amino-acid sequence, 389 residues long: Carbamoyl phosphate synthase small chain (389 aa).

Positions 1–197 (MMSSPAKAAK…AAKDASIGDD (197 aa)) are CPSase. Residues Ser51, Gly249, and Gly251 each coordinate L-glutamine. One can recognise a Glutamine amidotransferase type-1 domain in the interval 201–387 (HVVCMDFGMK…QEQLNEKCGV (187 aa)). Catalysis depends on Cys276, which acts as the Nucleophile. Residues Leu277, Gln280, Asn318, Gly320, and Phe321 each contribute to the L-glutamine site. Residues His360 and Glu362 contribute to the active site.

Belongs to the CarA family. In terms of assembly, composed of two chains; the small (or glutamine) chain promotes the hydrolysis of glutamine to ammonia, which is used by the large (or ammonia) chain to synthesize carbamoyl phosphate. Tetramer of heterodimers (alpha,beta)4.

The enzyme catalyses hydrogencarbonate + L-glutamine + 2 ATP + H2O = carbamoyl phosphate + L-glutamate + 2 ADP + phosphate + 2 H(+). It catalyses the reaction L-glutamine + H2O = L-glutamate + NH4(+). Its pathway is amino-acid biosynthesis; L-arginine biosynthesis; carbamoyl phosphate from bicarbonate: step 1/1. The protein operates within pyrimidine metabolism; UMP biosynthesis via de novo pathway; (S)-dihydroorotate from bicarbonate: step 1/3. Its function is as follows. Small subunit of the glutamine-dependent carbamoyl phosphate synthetase (CPSase). CPSase catalyzes the formation of carbamoyl phosphate from the ammonia moiety of glutamine, carbonate, and phosphate donated by ATP, constituting the first step of 2 biosynthetic pathways, one leading to arginine and/or urea and the other to pyrimidine nucleotides. The small subunit (glutamine amidotransferase) binds and cleaves glutamine to supply the large subunit with the substrate ammonia. The polypeptide is Carbamoyl phosphate synthase small chain (Rhodopirellula baltica (strain DSM 10527 / NCIMB 13988 / SH1)).